The following is a 248-amino-acid chain: 3-deoxy-manno-octulosonate cytidylyltransferase (248 aa).

The protein belongs to the KdsB family.

The protein resides in the cytoplasm. The enzyme catalyses 3-deoxy-alpha-D-manno-oct-2-ulosonate + CTP = CMP-3-deoxy-beta-D-manno-octulosonate + diphosphate. It functions in the pathway nucleotide-sugar biosynthesis; CMP-3-deoxy-D-manno-octulosonate biosynthesis; CMP-3-deoxy-D-manno-octulosonate from 3-deoxy-D-manno-octulosonate and CTP: step 1/1. The protein operates within bacterial outer membrane biogenesis; lipopolysaccharide biosynthesis. Its function is as follows. Activates KDO (a required 8-carbon sugar) for incorporation into bacterial lipopolysaccharide in Gram-negative bacteria. The polypeptide is 3-deoxy-manno-octulosonate cytidylyltransferase (Syntrophus aciditrophicus (strain SB)).